A 1132-amino-acid chain; its full sequence is Mis18-binding protein 1 (1132 aa).

Residue Lys7 forms a Glycyl lysine isopeptide (Lys-Gly) (interchain with G-Cter in SUMO2) linkage. Position 9 is a phosphoserine (Ser9). Residue Lys65 forms a Glycyl lysine isopeptide (Lys-Gly) (interchain with G-Cter in SUMO2) linkage. 5 positions are modified to phosphoserine: Ser110, Ser131, Ser135, Ser172, and Ser192. The tract at residues 123-154 (LRDKQEQPSRNSSLLEPQKSGNNETFTPNRVE) is disordered. Over residues 130-150 (PSRNSSLLEPQKSGNNETFTP) the composition is skewed to polar residues. Glycyl lysine isopeptide (Lys-Gly) (interchain with G-Cter in SUMO2) cross-links involve residues Lys211 and Lys262. Residue Ser299 is modified to Phosphoserine. Residues 306-332 (SERTTEGTSQQKVKEGNGKTVPGETGL) form a disordered region. The residue at position 365 (Ser365) is a Phosphoserine. An SANTA domain is found at 383-469 (VQLQEWMIKS…MFGFPENWKE (87 aa)). Residues 482 to 518 (EKNREKTKQKQKTGRSVRDIRKSMKNDARENQTDTAQ) form a disordered region. The span at 497-513 (SVRDIRKSMKNDARENQ) shows a compositional bias: basic and acidic residues. Residues Lys534, Lys612, Lys639, and Lys647 each participate in a glycyl lysine isopeptide (Lys-Gly) (interchain with G-Cter in SUMO2) cross-link. Residue Thr653 is modified to Phosphothreonine. Residues Lys727 and Lys742 each participate in a glycyl lysine isopeptide (Lys-Gly) (interchain with G-Cter in SUMO2) cross-link. Residues 765–798 (HQSSPDLSSEESETEKEIKRKAEVKKTKAGNTKE) are disordered. 2 positions are modified to phosphoserine: Ser772 and Ser773. Residues 779–790 (EKEIKRKAEVKK) are compositionally biased toward basic and acidic residues. Thr821 is subject to Phosphothreonine. Ser824 bears the Phosphoserine mark. Lys840 is covalently cross-linked (Glycyl lysine isopeptide (Lys-Gly) (interchain with G-Cter in SUMO2)). Ser860 carries the post-translational modification Phosphoserine. Residues 875–930 (IQDKEWNEKELQKLHCAFASLPKHKPGFWSEVAAAVGSRSPEECQRKYMENPRGKG) form the SANT domain. Lys899 participates in a covalent cross-link: Glycyl lysine isopeptide (Lys-Gly) (interchain with G-Cter in SUMO2). The tract at residues 923-957 (MENPRGKGSQKHVTKKKPANSKGQNGKRGDADQKQ) is disordered. Residues 930-941 (GSQKHVTKKKPA) are compositionally biased toward basic residues. Residues Lys956, Lys964, and Lys983 each participate in a glycyl lysine isopeptide (Lys-Gly) (interchain with G-Cter in SUMO2) cross-link. Position 1008 is a phosphoserine (Ser1008). Residue Lys1079 forms a Glycyl lysine isopeptide (Lys-Gly) (interchain with G-Cter in SUMO2) linkage. A Phosphoserine modification is found at Ser1086. Thr1087 and Thr1089 each carry phosphothreonine. A phosphoserine mark is found at Ser1104 and Ser1116.

In terms of assembly, interacts with SP1. Interacts with MIS18A. Identified in a complex containing MIS18A, OIP5/MIS18B, MIS18BP1, RBBP7 and RBBP4. Interacts with KAT7/HBO1. Interacts (via N-terminus) with FLNA (via N-terminus).

The protein resides in the nucleus. Its subcellular location is the chromosome. The protein localises to the centromere. Required for recruitment of CENPA to centromeres and normal chromosome segregation during mitosis. In Homo sapiens (Human), this protein is Mis18-binding protein 1 (MIS18BP1).